The primary structure comprises 764 residues: Nucleolar transcription factor 1 (764 aa).

At M1 the chain carries N-acetylmethionine. The disordered stretch occupies residues 1–21 (MNGEADCPTDLEMAAPKGQDR). 2 consecutive DNA-binding regions (HMG box) follow at residues 112-180 (PKKP…ARFR) and 196-264 (PEKP…RDYI). The residue at position 201 (T201) is a Phosphothreonine. Phosphoserine is present on residues S273, S336, S364, S389, S412, S433, S435, S484, S495, S546, S584, and S638. The HMG box 3 DNA-binding region spans 298 to 362 (TKPPPNSYSL…DYEVELLRFL (65 aa)). A disordered region spans residues 381–411 (NINKKQATSPASKKPAQEGGKGGSEKPKRPV). 3 DNA-binding regions (HMG box) span residues 407–475 (PKRP…GGER), 482–549 (PESP…SEMR), and 568–634 (KKPP…DLWV). The interval 459–487 (REAALKAQSERKPGGEREERGKLPESPKR) is disordered. Residues 546-576 (SEMRAPPAATNSSKKMKFQGEPKKPPMNGYQ) are disordered. Positions 648–764 (YISNKRKSMT…SGDSSDSDSN (117 aa)) are disordered. The segment covering 664–674 (PKSSRTTLQSK) has biased composition (polar residues). Residues 677–745 (SEEDDEEDED…DDDEDEDNES (69 aa)) are compositionally biased toward acidic residues. Residues 746–758 (EGSSSSSSSSGDS) show a composition bias toward low complexity.

As to quaternary structure, homodimer. Part of Pol I pre-initiation complex (PIC), in which Pol I core assembles with RRN3 and promoter-bound UTBF and SL1/TIF-IB complex. Interacts with TOP2A in the context of Pol I complex. Interacts with TBP. Interacts with TAF1A. Interacts with RASL11A. Binds to IRS1 and PIK3CA. Interacts with DHX33. Interacts with PHF6. Interacts with CEBPA (isoform 1 and isoform 4). Interacts with DDX11. Interacts with NOP53. Interacts with ALKBH2. Phosphorylated and activated by PIK3CA.

It localises to the nucleus. Its subcellular location is the nucleolus. Recognizes the ribosomal RNA gene promoter and activates transcription mediated by RNA polymerase I (Pol I) through cooperative interactions with the transcription factor SL1/TIF-IB complex. It binds specifically to the upstream control element and can activate Pol I promoter escape. In Homo sapiens (Human), this protein is Nucleolar transcription factor 1 (UBTF).